The chain runs to 925 residues: Alanine--tRNA ligase (925 aa).

Positions 611, 615, 714, and 718 each coordinate Zn(2+).

It belongs to the class-II aminoacyl-tRNA synthetase family. Zn(2+) is required as a cofactor.

The protein localises to the cytoplasm. It carries out the reaction tRNA(Ala) + L-alanine + ATP = L-alanyl-tRNA(Ala) + AMP + diphosphate. Functionally, catalyzes the attachment of alanine to tRNA(Ala) in a two-step reaction: alanine is first activated by ATP to form Ala-AMP and then transferred to the acceptor end of tRNA(Ala). Also edits incorrectly charged Ser-tRNA(Ala) and Gly-tRNA(Ala) via its editing domain. This chain is Alanine--tRNA ligase, found in Methanosarcina acetivorans (strain ATCC 35395 / DSM 2834 / JCM 12185 / C2A).